Reading from the N-terminus, the 381-residue chain is 3-dehydroquinate synthase (381 aa).

Residues glutamate 81–lysine 86, glycine 115–aspartate 119, threonine 139–serine 140, lysine 152, and lysine 161 contribute to the NAD(+) site. 3 residues coordinate Zn(2+): glutamate 194, histidine 256, and histidine 274.

Belongs to the sugar phosphate cyclases superfamily. Dehydroquinate synthase family. Co(2+) serves as cofactor. It depends on Zn(2+) as a cofactor. Requires NAD(+) as cofactor.

It is found in the cytoplasm. It carries out the reaction 7-phospho-2-dehydro-3-deoxy-D-arabino-heptonate = 3-dehydroquinate + phosphate. The protein operates within metabolic intermediate biosynthesis; chorismate biosynthesis; chorismate from D-erythrose 4-phosphate and phosphoenolpyruvate: step 2/7. Catalyzes the conversion of 3-deoxy-D-arabino-heptulosonate 7-phosphate (DAHP) to dehydroquinate (DHQ). The chain is 3-dehydroquinate synthase from Rhodopseudomonas palustris (strain ATCC BAA-98 / CGA009).